The chain runs to 327 residues: tRNA uridine(34) hydroxylase (327 aa).

A Rhodanese domain is found at 130–224; sequence LDEDTVVLDT…YGKDPEVRGE (95 aa). The active-site Cysteine persulfide intermediate is the Cys-184.

It belongs to the TrhO family.

The catalysed reaction is uridine(34) in tRNA + AH2 + O2 = 5-hydroxyuridine(34) in tRNA + A + H2O. In terms of biological role, catalyzes oxygen-dependent 5-hydroxyuridine (ho5U) modification at position 34 in tRNAs. This Streptococcus suis (strain 98HAH33) protein is tRNA uridine(34) hydroxylase.